The sequence spans 504 residues: ATP synthase subunit alpha (504 aa).

Position 170–177 (170–177) interacts with ATP; sequence GDRQTGKT.

Belongs to the ATPase alpha/beta chains family. As to quaternary structure, F-type ATPases have 2 components, CF(1) - the catalytic core - and CF(0) - the membrane proton channel. CF(1) has five subunits: alpha(3), beta(3), gamma(1), delta(1), epsilon(1). CF(0) has three main subunits: a(1), b(2) and c(9-12). The alpha and beta chains form an alternating ring which encloses part of the gamma chain. CF(1) is attached to CF(0) by a central stalk formed by the gamma and epsilon chains, while a peripheral stalk is formed by the delta and b chains.

Its subcellular location is the cell membrane. The enzyme catalyses ATP + H2O + 4 H(+)(in) = ADP + phosphate + 5 H(+)(out). Its function is as follows. Produces ATP from ADP in the presence of a proton gradient across the membrane. The alpha chain is a regulatory subunit. The chain is ATP synthase subunit alpha from Shouchella clausii (strain KSM-K16) (Alkalihalobacillus clausii).